A 330-amino-acid polypeptide reads, in one-letter code: 4-epi-cubebol synthase ((2E,6E)-farnesyl diphosphate cyclizing) (330 aa).

Residues D91 and E96 each contribute to the Mg(2+) site. The DDXXXE motif signature appears at 91 to 96 (DDAFCE). Substrate is bound at residue R184. Mg(2+) is bound by residues N230 and S234. K237 lines the substrate pocket. E238 is a Mg(2+) binding site. Position 316 to 317 (316 to 317 (RY)) interacts with substrate.

It belongs to the terpene synthase family. Requires Mg(2+) as cofactor.

It catalyses the reaction (2E,6E)-farnesyl diphosphate + H2O = 4-epi-cubebol + diphosphate. The protein operates within secondary metabolite biosynthesis; terpenoid biosynthesis. Its function is as follows. Catalyzes the conversion of (2E,6E)-farnesyl diphosphate (FPP) to yield the bicyclic sesquiterpenol 4-epi-cubebol via a 1,10-cyclization, which requires the abstraction of the pyrophosphate from FPP to yield a (E,E)-germacradienyl cation. The only accepted substrate is (2E,6E)-farnesyl diphosphate (FPP). In Streptosporangium roseum (strain ATCC 12428 / DSM 43021 / JCM 3005 / KCTC 9067 / NCIMB 10171 / NRRL 2505 / NI 9100), this protein is 4-epi-cubebol synthase ((2E,6E)-farnesyl diphosphate cyclizing).